Reading from the N-terminus, the 311-residue chain is Tricarboxylate transport protein, mitochondrial (311 aa).

Positions 1-13 (MPAPRAPRALAAA) are cleaved as a propeptide — removed in mature form. Solcar repeat units lie at residues 23–111 (THPG…LSNH), 122–208 (TRGL…LRNW), and 218–303 (MNPL…VVKL). Transmembrane regions (helical) follow at residues 29–46 (ILAG…TFPT), 86–105 (GLSS…FGMF), and 129–143 (LGAG…VCPM). A Phosphoserine modification is found at serine 156. 3 consecutive transmembrane segments (helical) span residues 183 to 202 (GLTA…FFVM), 224 to 241 (GVFG…NTPL), and 278 to 297 (GTVP…FVIY).

The protein belongs to the mitochondrial carrier (TC 2.A.29) family. Post-translationally, possesses a short cleavable presequence, which, however, is found to be dispensable both for targeting to mitochondria and insertion into the inner membrane. However, the presequence is required to keep SLC25A1 in a soluble state and thus in an import-competent state. Mature SLC25A1 lacking the presequence is prone to aggregation.

The protein localises to the mitochondrion inner membrane. It carries out the reaction (S)-malate(in) + citrate(out) = (S)-malate(out) + citrate(in). The catalysed reaction is D-threo-isocitrate(in) + citrate(out) = D-threo-isocitrate(out) + citrate(in). It catalyses the reaction citrate(out) + succinate(in) = citrate(in) + succinate(out). The enzyme catalyses cis-aconitate(in) + citrate(out) = cis-aconitate(out) + citrate(in). It carries out the reaction trans-aconitate(in) + citrate(out) = trans-aconitate(out) + citrate(in). The catalysed reaction is phosphoenolpyruvate(in) + citrate(out) = phosphoenolpyruvate(out) + citrate(in). It catalyses the reaction maleate(in) + citrate(out) = maleate(out) + citrate(in). Functionally, mitochondrial electroneutral antiporter that exports citrate from the mitochondria into the cytosol in exchange for malate. Also able to mediate the exchange of citrate for isocitrate, phosphoenolpyruvate, cis-aconitate and to a lesser extent trans-aconitate, maleate and succinate. In the cytoplasm, citrate plays important roles in fatty acid and sterol synthesis, regulation of glycolysis, protein acetylation, and other physiopathological processes. This is Tricarboxylate transport protein, mitochondrial (SLC25A1) from Homo sapiens (Human).